The sequence spans 128 residues: Transcription antitermination protein NusB (128 aa).

It belongs to the NusB family.

In terms of biological role, involved in transcription antitermination. Required for transcription of ribosomal RNA (rRNA) genes. Binds specifically to the boxA antiterminator sequence of the ribosomal RNA (rrn) operons. The polypeptide is Transcription antitermination protein NusB (Staphylococcus carnosus (strain TM300)).